Here is an 842-residue protein sequence, read N- to C-terminus: Elongation factor 2 (842 aa).

Residues 17-253 (TNVRNMSVIA…LWGDSYFNPK (237 aa)) enclose the tr-type G domain. GTP is bound by residues 26–33 (AHVDHGKS), 158–161 (NKVD), and 213–215 (SGL). The residue at position 699 (His-699) is a Diphthamide.

It belongs to the TRAFAC class translation factor GTPase superfamily. Classic translation factor GTPase family. EF-G/EF-2 subfamily.

The protein localises to the cytoplasm. The catalysed reaction is GTP + H2O = GDP + phosphate + H(+). Its function is as follows. Catalyzes the GTP-dependent ribosomal translocation step during translation elongation. During this step, the ribosome changes from the pre-translocational (PRE) to the post-translocational (POST) state as the newly formed A-site-bound peptidyl-tRNA and P-site-bound deacylated tRNA move to the P and E sites, respectively. Catalyzes the coordinated movement of the two tRNA molecules, the mRNA and conformational changes in the ribosome. This Komagataella pastoris (Yeast) protein is Elongation factor 2 (EFT1).